The sequence spans 225 residues: Ribonuclease 3 (225 aa).

The RNase III domain maps to 5-127 (IDKLERKLGY…IIGAIYLDSD (123 aa)). Mg(2+) is bound at residue E40. The active site involves D44. Mg(2+) contacts are provided by D113 and E116. E116 is a catalytic residue. Positions 154–224 (DPKTRLQEFL…AETALEQLTN (71 aa)) constitute a DRBM domain. The segment at 204 to 225 (GTSRRKAEQAAAETALEQLTNG) is disordered. Positions 212 to 225 (QAAAETALEQLTNG) are enriched in low complexity.

Belongs to the ribonuclease III family. In terms of assembly, homodimer. Requires Mg(2+) as cofactor.

The protein localises to the cytoplasm. It carries out the reaction Endonucleolytic cleavage to 5'-phosphomonoester.. Functionally, digests double-stranded RNA. Involved in the processing of primary rRNA transcript to yield the immediate precursors to the large and small rRNAs (23S and 16S). Processes some mRNAs, and tRNAs when they are encoded in the rRNA operon. Processes pre-crRNA and tracrRNA of type II CRISPR loci if present in the organism. This Vibrio parahaemolyticus serotype O3:K6 (strain RIMD 2210633) protein is Ribonuclease 3.